A 520-amino-acid polypeptide reads, in one-letter code: Sensory neuron membrane protein 2 (520 aa).

Over 1 to 7 (MLGKHSK) the chain is Cytoplasmic. The helical transmembrane segment at 8–28 (IFFGVSLIFLVIAIVLASWGF) threads the bilayer. The Extracellular segment spans residues 29–468 (QKIVNKQIQK…DSHKLLGYVE (440 aa)). N-linked (GlcNAc...) asparagine glycans are attached at residues asparagine 44, asparagine 67, asparagine 104, asparagine 228, asparagine 271, asparagine 313, and asparagine 342. 3 cysteine pairs are disulfide-bonded: cysteine 267–cysteine 337, cysteine 298–cysteine 361, and cysteine 339–cysteine 350. Residues 469 to 489 (VAKWFLLTIAIISVIASAVAV) form a helical membrane-spanning segment. At 490–520 (ARANALLSWPRNSNSVSFILGPSVTQVNKGN) the chain is on the cytoplasmic side.

It belongs to the CD36 family. In terms of tissue distribution, localizes to cells surrounding the sensory neurons in the antenna. Associate in a ratio of 2:1 with the neurons expressing the other subtype SNMP1.

It is found in the cell membrane. Plays an olfactory role that is not restricted to pheromone sensitivity. May play a role in the elimination of lipophilic components from the sensillum lymph. In Heliothis virescens (Tobacco budworm moth), this protein is Sensory neuron membrane protein 2.